The chain runs to 385 residues: Cytochrome b (385 aa).

4 helical membrane-spanning segments follow: residues 32 to 52, 76 to 98, 113 to 133, and 179 to 199; these read FGSL…TLAM, WLVR…LHIG, TWAI…LGYV, and FFAL…MHLI. Residues His82 and His96 each coordinate heme b. Heme b is bound by residues His183 and His197. A ubiquinone is bound at residue His202. 4 consecutive transmembrane segments (helical) span residues 226–246, 290–310, 322–342, and 349–369; these read FVFK…IFVF, LLGV…PITD, LSKV…QIGA, and FIEF…VIVP.

It belongs to the cytochrome b family. As to quaternary structure, fungal cytochrome b-c1 complex contains 10 subunits; 3 respiratory subunits, 2 core proteins and 5 low-molecular weight proteins. Cytochrome b-c1 complex is a homodimer. Heme b is required as a cofactor.

The protein resides in the mitochondrion inner membrane. In terms of biological role, component of the ubiquinol-cytochrome c reductase complex (complex III or cytochrome b-c1 complex) that is part of the mitochondrial respiratory chain. The b-c1 complex mediates electron transfer from ubiquinol to cytochrome c. Contributes to the generation of a proton gradient across the mitochondrial membrane that is then used for ATP synthesis. The sequence is that of Cytochrome b (cob) from Aspergillus terreus (strain NIH 2624 / FGSC A1156).